The sequence spans 356 residues: MFDRLSVLEDRYMQLNEMLADPEVLSDSTKLRQYSKEQAQLEETVQMYRQYKETSQAFKEAKSMLEDRTLDAEMRELAKEEMNLLEPEVKELEAKLRILLLPKDPNDEKNVIVEVRGAAGGDEAALFAGDLYKMYTRFAERQNWKVELIDANYTELGGFKEVTFMINGAGAYSKLKFENGAHRVQRVPSTESGGRIHTSTATVAVLPEAEDVEVHIDMKDVRVDTFTSSGPGGQSVNTTQSAVRLTHIPSGLVVSCQDEKSQHKNKDKAMKVLRARLYDKMQSEHMEELSAQRKSAVGTGDRSERIRTYNFPQSRVTDHRIGLTLQKLDRVLAGELEDIIDALIMDEQARLMEDAE.

Position 234 is an N5-methylglutamine (Q234).

This sequence belongs to the prokaryotic/mitochondrial release factor family. In terms of processing, methylated by PrmC. Methylation increases the termination efficiency of RF1.

It is found in the cytoplasm. Its function is as follows. Peptide chain release factor 1 directs the termination of translation in response to the peptide chain termination codons UAG and UAA. The chain is Peptide chain release factor 1 from Exiguobacterium sp. (strain ATCC BAA-1283 / AT1b).